The sequence spans 152 residues: UPF0178 protein Bcer98_3021 (152 aa).

Belongs to the UPF0178 family.

The protein is UPF0178 protein Bcer98_3021 of Bacillus cytotoxicus (strain DSM 22905 / CIP 110041 / 391-98 / NVH 391-98).